The primary structure comprises 92 residues: Small ribosomal subunit protein bS20 (92 aa).

This sequence belongs to the bacterial ribosomal protein bS20 family.

Binds directly to 16S ribosomal RNA. The chain is Small ribosomal subunit protein bS20 from Persephonella marina (strain DSM 14350 / EX-H1).